The primary structure comprises 287 residues: Ribosomal RNA small subunit methyltransferase I (287 aa).

It belongs to the methyltransferase superfamily. RsmI family.

It localises to the cytoplasm. The enzyme catalyses cytidine(1402) in 16S rRNA + S-adenosyl-L-methionine = 2'-O-methylcytidine(1402) in 16S rRNA + S-adenosyl-L-homocysteine + H(+). Its function is as follows. Catalyzes the 2'-O-methylation of the ribose of cytidine 1402 (C1402) in 16S rRNA. This Streptococcus pyogenes serotype M1 protein is Ribosomal RNA small subunit methyltransferase I.